The chain runs to 153 residues: 6,7-dimethyl-8-ribityllumazine synthase (153 aa).

5-amino-6-(D-ribitylamino)uracil-binding positions include Phe-21, 55–57 (AFE), and 79–81 (TVI). 84–85 (AT) provides a ligand contact to (2S)-2-hydroxy-3-oxobutyl phosphate. His-87 acts as the Proton donor in catalysis. Phe-112 provides a ligand contact to 5-amino-6-(D-ribitylamino)uracil. A (2S)-2-hydroxy-3-oxobutyl phosphate-binding site is contributed by Arg-126.

Belongs to the DMRL synthase family. Forms an icosahedral capsid composed of 60 subunits, arranged as a dodecamer of pentamers.

The catalysed reaction is (2S)-2-hydroxy-3-oxobutyl phosphate + 5-amino-6-(D-ribitylamino)uracil = 6,7-dimethyl-8-(1-D-ribityl)lumazine + phosphate + 2 H2O + H(+). Its pathway is cofactor biosynthesis; riboflavin biosynthesis; riboflavin from 2-hydroxy-3-oxobutyl phosphate and 5-amino-6-(D-ribitylamino)uracil: step 1/2. Functionally, catalyzes the formation of 6,7-dimethyl-8-ribityllumazine by condensation of 5-amino-6-(D-ribitylamino)uracil with 3,4-dihydroxy-2-butanone 4-phosphate. This is the penultimate step in the biosynthesis of riboflavin. The chain is 6,7-dimethyl-8-ribityllumazine synthase from Bacillus cereus (strain AH187).